We begin with the raw amino-acid sequence, 471 residues long: ATP synthase subunit beta (471 aa).

Position 152–159 (152–159 (GGAGVGKT)) interacts with ATP.

Belongs to the ATPase alpha/beta chains family. F-type ATPases have 2 components, CF(1) - the catalytic core - and CF(0) - the membrane proton channel. CF(1) has five subunits: alpha(3), beta(3), gamma(1), delta(1), epsilon(1). CF(0) has three main subunits: a(1), b(2) and c(9-12). The alpha and beta chains form an alternating ring which encloses part of the gamma chain. CF(1) is attached to CF(0) by a central stalk formed by the gamma and epsilon chains, while a peripheral stalk is formed by the delta and b chains.

It localises to the cell membrane. It catalyses the reaction ATP + H2O + 4 H(+)(in) = ADP + phosphate + 5 H(+)(out). In terms of biological role, produces ATP from ADP in the presence of a proton gradient across the membrane. The catalytic sites are hosted primarily by the beta subunits. The polypeptide is ATP synthase subunit beta (Herpetosiphon aurantiacus (strain ATCC 23779 / DSM 785 / 114-95)).